A 528-amino-acid polypeptide reads, in one-letter code: Chaperonin GroEL, chloroplastic (528 aa).

ATP-binding positions include 29–32 (TLGP), 86–90 (DGTTT), Gly414, and Asp496.

This sequence belongs to the chaperonin (HSP60) family. In terms of assembly, forms a cylinder of 14 subunits composed of two heptameric rings stacked back-to-back. Interacts with the co-chaperonin GroES.

It is found in the plastid. The protein localises to the chloroplast. It carries out the reaction ATP + H2O + a folded polypeptide = ADP + phosphate + an unfolded polypeptide.. Functionally, together with its co-chaperonin GroES, plays an essential role in assisting protein folding. The GroEL-GroES system forms a nano-cage that allows encapsulation of the non-native substrate proteins and provides a physical environment optimized to promote and accelerate protein folding. The polypeptide is Chaperonin GroEL, chloroplastic (Porphyra purpurea (Red seaweed)).